The following is a 1039-amino-acid chain: Error-prone DNA polymerase (1039 aa).

Belongs to the DNA polymerase type-C family. DnaE2 subfamily.

The protein resides in the cytoplasm. The catalysed reaction is DNA(n) + a 2'-deoxyribonucleoside 5'-triphosphate = DNA(n+1) + diphosphate. DNA polymerase involved in damage-induced mutagenesis and translesion synthesis (TLS). It is not the major replicative DNA polymerase. The protein is Error-prone DNA polymerase of Corynebacterium diphtheriae (strain ATCC 700971 / NCTC 13129 / Biotype gravis).